The following is a 297-amino-acid chain: Iron-sulfur cluster assembly SufBD family protein ycf24 (297 aa).

This sequence belongs to the iron-sulfur cluster assembly SufBD family.

Its subcellular location is the plastid. The protein resides in the chloroplast. In Antithamnion sp. (Red alga), this protein is Iron-sulfur cluster assembly SufBD family protein ycf24 (ycf24).